The sequence spans 116 residues: Vesicle-associated membrane protein 2 (116 aa).

Residues Met1 to Gln33 form a disordered region. Ser2 is modified (N-acetylserine). At Ser2 to Lys94 the chain is on the cytoplasmic side. Residues Arg31–Lys91 enclose the v-SNARE coiled-coil homology domain. Positions Asn92–Ser116 are required for interaction with SEPT8. The chain crosses the membrane as a helical; Anchor for type IV membrane protein span at residues Met95–Phe114. Over Ser115–Ser116 the chain is Vesicular.

This sequence belongs to the synaptobrevin family. In terms of assembly, part of the SNARE core complex containing SNAP25, VAMP2 and STX1A; this complex constitutes the basic catalytic machinery of the complex neurotransmitter release apparatus. Recruited to the SNARE complex following binding of the SNARE complex component STX1A to STXBP1. This complex binds to CPLX1. Interacts with POPDC1 and STX4. Interacts with VAPA and VAPB. Interacts with WDFY2, PRKCZ and PRKCI. Forms a complex with WDFY2 and PRKCZ. Interacts (via N-terminus) with KCNB1 (via N-terminus and C-terminus); stimulates the channel inactivation rate of KCNB1. Interacts with SEPT8; the interaction inhibits interaction of VAMP2 with SYP. Interacts with SYP; the interaction is inhibited by interaction with SEPT8. Interacts with PICALM. Interacts with alpha-synuclein/SNCA. Interacts with STX3. Post-translationally, phosphorylated by PRKCZ in vitro and this phosphorylation is increased in the presence of WDFY2.

It is found in the cytoplasmic vesicle. The protein resides in the secretory vesicle. Its subcellular location is the synaptic vesicle membrane. The protein localises to the cell membrane. In terms of biological role, involved in the targeting and/or fusion of transport vesicles to their target membrane. Major SNARE protein of synaptic vesicles which mediates fusion of synaptic vesicles to release neurotransmitters. Essential for fast vesicular exocytosis and activity-dependent neurotransmitter release as well as fast endocytosis that mediates rapid reuse of synaptic vesicles. Modulates the gating characteristics of the delayed rectifier voltage-dependent potassium channel KCNB1. In Bos taurus (Bovine), this protein is Vesicle-associated membrane protein 2 (VAMP2).